We begin with the raw amino-acid sequence, 160 residues long: Serine-protein kinase RsbW (160 aa).

It belongs to the anti-sigma-factor family.

The enzyme catalyses L-seryl-[protein] + ATP = O-phospho-L-seryl-[protein] + ADP + H(+). It carries out the reaction L-threonyl-[protein] + ATP = O-phospho-L-threonyl-[protein] + ADP + H(+). Its function is as follows. Negative regulator of sigma-B activity. Phosphorylates and inactivates its specific antagonist protein, RsbV. Upon phosphorylation of RsbV, RsbW is released and binds to sigma-B, thereby blocking its ability to form an RNA polymerase holoenzyme (E-sigma-B). The polypeptide is Serine-protein kinase RsbW (Bacillus cereus (strain B4264)).